Here is a 365-residue protein sequence, read N- to C-terminus: MKPQEEEEKNENMARKRSKSSSSLSIPLDIATDIFLRLPAKSVVRFSCVAKHWSSITTAPYFTNSFETRPNLLFFFKEADRFFVVTVPKPNRRPNESVSHTSSQILDSYQTPYPKHSCFTIKTESVHGLICFQRGTKPIVWNPTMRKFKPLRKPDKSWESLTVFLGYDPLERTHKVVAMPCDKASDECRILTLGSADQESWRTVKTNYKHHPSRGNRKNNYGPCRCINGVLYYLAEIDRHRLIGKFAFLGHSNVKNSLPMWVLEGEKKGEWSTYNFLPLSHYDRRLEFHFKLIGITNDGELIYVPNTVFKTFEVIYIDPIRKTFSLVKYEGVADKGFRQRNGLGEDKPLRGIQYSPNHVETLLSL.

Positions 1–20 (MKPQEEEEKNENMARKRSKS) are disordered. The F-box domain occupies 20–69 (SSSSLSIPLDIATDIFLRLPAKSVVRFSCVAKHWSSITTAPYFTNSFETR).

The protein is F-box protein At1g48060 of Arabidopsis thaliana (Mouse-ear cress).